A 159-amino-acid polypeptide reads, in one-letter code: Phosphopantetheine adenylyltransferase (159 aa).

Substrate is bound at residue Ser-10. ATP contacts are provided by residues 10-11 (SF) and His-18. Substrate-binding residues include Lys-42, Leu-77, and Lys-91. Residues 92 to 94 (GIR), Glu-102, and 126 to 132 (NAHVSSS) each bind ATP.

Belongs to the bacterial CoaD family. In terms of assembly, homohexamer. Mg(2+) serves as cofactor.

It is found in the cytoplasm. The enzyme catalyses (R)-4'-phosphopantetheine + ATP + H(+) = 3'-dephospho-CoA + diphosphate. Its pathway is cofactor biosynthesis; coenzyme A biosynthesis; CoA from (R)-pantothenate: step 4/5. Functionally, reversibly transfers an adenylyl group from ATP to 4'-phosphopantetheine, yielding dephospho-CoA (dPCoA) and pyrophosphate. The sequence is that of Phosphopantetheine adenylyltransferase from Leifsonia xyli subsp. xyli (strain CTCB07).